Consider the following 359-residue polypeptide: 3-dehydroquinate synthase (359 aa).

NAD(+) contacts are provided by residues Asp71–Lys76, Gly105–Asp109, Thr129–Thr130, Lys142, and Lys151. Zn(2+) is bound by residues Glu184, His247, and His264.

Belongs to the sugar phosphate cyclases superfamily. Dehydroquinate synthase family. Requires Co(2+) as cofactor. It depends on Zn(2+) as a cofactor. NAD(+) serves as cofactor.

It is found in the cytoplasm. It carries out the reaction 7-phospho-2-dehydro-3-deoxy-D-arabino-heptonate = 3-dehydroquinate + phosphate. Its pathway is metabolic intermediate biosynthesis; chorismate biosynthesis; chorismate from D-erythrose 4-phosphate and phosphoenolpyruvate: step 2/7. Its function is as follows. Catalyzes the conversion of 3-deoxy-D-arabino-heptulosonate 7-phosphate (DAHP) to dehydroquinate (DHQ). The chain is 3-dehydroquinate synthase from Burkholderia cenocepacia (strain ATCC BAA-245 / DSM 16553 / LMG 16656 / NCTC 13227 / J2315 / CF5610) (Burkholderia cepacia (strain J2315)).